A 141-amino-acid chain; its full sequence is Ribosome-binding factor A (141 aa).

It belongs to the RbfA family. Monomer. Binds 30S ribosomal subunits, but not 50S ribosomal subunits or 70S ribosomes.

The protein resides in the cytoplasm. In terms of biological role, one of several proteins that assist in the late maturation steps of the functional core of the 30S ribosomal subunit. Associates with free 30S ribosomal subunits (but not with 30S subunits that are part of 70S ribosomes or polysomes). Required for efficient processing of 16S rRNA. May interact with the 5'-terminal helix region of 16S rRNA. This Beijerinckia indica subsp. indica (strain ATCC 9039 / DSM 1715 / NCIMB 8712) protein is Ribosome-binding factor A.